Reading from the N-terminus, the 224-residue chain is ATP-dependent dethiobiotin synthetase BioD (224 aa).

12 to 17 (GVGKTF) is an ATP binding site. A Mg(2+)-binding site is contributed by T16. Residue K37 is part of the active site. T41 is a binding site for substrate. ATP-binding positions include N52, 107–110 (EGAG), 167–168 (GS), 197–199 (PEG), and E204. Mg(2+) contacts are provided by N52 and E107.

This sequence belongs to the dethiobiotin synthetase family. Homodimer. Mg(2+) serves as cofactor.

The protein resides in the cytoplasm. It catalyses the reaction (7R,8S)-7,8-diammoniononanoate + CO2 + ATP = (4R,5S)-dethiobiotin + ADP + phosphate + 3 H(+). Its pathway is cofactor biosynthesis; biotin biosynthesis; biotin from 7,8-diaminononanoate: step 1/2. Functionally, catalyzes a mechanistically unusual reaction, the ATP-dependent insertion of CO2 between the N7 and N8 nitrogen atoms of 7,8-diaminopelargonic acid (DAPA, also called 7,8-diammoniononanoate) to form a ureido ring. In Corynebacterium glutamicum (strain ATCC 13032 / DSM 20300 / JCM 1318 / BCRC 11384 / CCUG 27702 / LMG 3730 / NBRC 12168 / NCIMB 10025 / NRRL B-2784 / 534), this protein is ATP-dependent dethiobiotin synthetase BioD.